We begin with the raw amino-acid sequence, 213 residues long: Glycerol-3-phosphate acyltransferase (213 aa).

The next 6 helical transmembrane spans lie at 4 to 24, 48 to 68, 71 to 91, 113 to 133, 144 to 164, and 165 to 185; these read IILLLIASYLLGAIPFGLWIG, ILGVKAGISVFAFDLLKGTLA, LPLFFHINGVSPLIFGLLAVI, VILGFSPLFLIYLLVVFIIVL, VIGAVFALLGILIFPSIGFIL, and TSYDLLFSIIIFVLAIIIILR.

It belongs to the PlsY family. Probably interacts with PlsX.

It localises to the cell membrane. It catalyses the reaction an acyl phosphate + sn-glycerol 3-phosphate = a 1-acyl-sn-glycero-3-phosphate + phosphate. It participates in lipid metabolism; phospholipid metabolism. In terms of biological role, catalyzes the transfer of an acyl group from acyl-phosphate (acyl-PO(4)) to glycerol-3-phosphate (G3P) to form lysophosphatidic acid (LPA). This enzyme utilizes acyl-phosphate as fatty acyl donor, but not acyl-CoA or acyl-ACP. In Lactococcus lactis subsp. lactis (strain IL1403) (Streptococcus lactis), this protein is Glycerol-3-phosphate acyltransferase.